Here is a 216-residue protein sequence, read N- to C-terminus: NADH-quinone oxidoreductase subunit C (216 aa).

The protein belongs to the complex I 30 kDa subunit family. As to quaternary structure, NDH-1 is composed of 14 different subunits. Subunits NuoB, C, D, E, F, and G constitute the peripheral sector of the complex.

It localises to the cell inner membrane. The enzyme catalyses a quinone + NADH + 5 H(+)(in) = a quinol + NAD(+) + 4 H(+)(out). NDH-1 shuttles electrons from NADH, via FMN and iron-sulfur (Fe-S) centers, to quinones in the respiratory chain. The immediate electron acceptor for the enzyme in this species is believed to be ubiquinone. Couples the redox reaction to proton translocation (for every two electrons transferred, four hydrogen ions are translocated across the cytoplasmic membrane), and thus conserves the redox energy in a proton gradient. The chain is NADH-quinone oxidoreductase subunit C from Francisella tularensis subsp. holarctica (strain OSU18).